Reading from the N-terminus, the 107-residue chain is Phosphoribosyl-ATP pyrophosphatase (107 aa).

Belongs to the PRA-PH family.

It is found in the cytoplasm. The catalysed reaction is 1-(5-phospho-beta-D-ribosyl)-ATP + H2O = 1-(5-phospho-beta-D-ribosyl)-5'-AMP + diphosphate + H(+). The protein operates within amino-acid biosynthesis; L-histidine biosynthesis; L-histidine from 5-phospho-alpha-D-ribose 1-diphosphate: step 2/9. The protein is Phosphoribosyl-ATP pyrophosphatase of Caulobacter sp. (strain K31).